Reading from the N-terminus, the 468-residue chain is Glutamate--tRNA ligase 2 (468 aa).

The 'HIGH' region motif lies at 9–19 (PSPTGFLHIGG). The 'KMSKS' region signature appears at 238–242 (KLSKR). ATP is bound at residue Lys241.

Belongs to the class-I aminoacyl-tRNA synthetase family. Glutamate--tRNA ligase type 1 subfamily. In terms of assembly, monomer.

It localises to the cytoplasm. The catalysed reaction is tRNA(Glu) + L-glutamate + ATP = L-glutamyl-tRNA(Glu) + AMP + diphosphate. Catalyzes the attachment of glutamate to tRNA(Glu) in a two-step reaction: glutamate is first activated by ATP to form Glu-AMP and then transferred to the acceptor end of tRNA(Glu). In Rhodospirillum rubrum (strain ATCC 11170 / ATH 1.1.1 / DSM 467 / LMG 4362 / NCIMB 8255 / S1), this protein is Glutamate--tRNA ligase 2.